A 448-amino-acid chain; its full sequence is Methionine aminopeptidase 2 (448 aa).

Residues 1–94 (MAAQVTDALK…PRVLLSNLFP (94 aa)) form a disordered region. The segment covering 37–50 (AEAEDSDDDDEEPV) has biased composition (acidic residues). A compositionally biased stretch (basic residues) spans 61 to 74 (KKKRKRKKKPKKKA). Residue His201 participates in substrate binding. Residues Asp221, Asp232, and His301 each coordinate a divalent metal cation. His309 contributes to the substrate binding site. A divalent metal cation is bound by residues Glu334 and Glu429.

The protein belongs to the peptidase M24A family. Methionine aminopeptidase eukaryotic type 2 subfamily. Requires Co(2+) as cofactor. Zn(2+) is required as a cofactor. It depends on Mn(2+) as a cofactor. The cofactor is Fe(2+).

The protein resides in the cytoplasm. It carries out the reaction Release of N-terminal amino acids, preferentially methionine, from peptides and arylamides.. Cotranslationally removes the N-terminal methionine from nascent proteins. The N-terminal methionine is often cleaved when the second residue in the primary sequence is small and uncharged (Met-Ala-, Cys, Gly, Pro, Ser, Thr, or Val). This Botryotinia fuckeliana (strain B05.10) (Noble rot fungus) protein is Methionine aminopeptidase 2.